The sequence spans 6793 residues: Replicase polyprotein 1ab (6793 aa).

Positions 2–109 (ASNHISLAFA…ELDLVFGRCG (108 aa)) constitute a CoV Nsp1 globular domain. The 257-residue stretch at 112 to 368 (TIPVDQFMCG…TKFKFQLLAN (257 aa)) folds into the CoV Nsp2 N-terminal domain. The 390-residue stretch at 396-785 (ILGLPWFVKK…LDTVTSFIKV (390 aa)) folds into the CoV Nsp2 middle domain. The CoV Nsp2 C-terminal domain occupies 776-897 (LDTVTSFIKV…VASCFKKKGG (122 aa)). A Ubiquitin-like 1 domain is found at 898–993 (GVVTISDEVQ…IMVSQWPLSS (96 aa)). In terms of domain architecture, Peptidase C16 1 spans 1069–1302 (AFIEDKPVVV…SCDVKPFLTY (234 aa)). Residue Cys-1103 is the For PL1-PRO activity of the active site. The C4-type 1; degenerate zinc finger occupies 1174-1205 (CGCGPGVRVYENAIFRFTPLKTAFPMGRCLIC). Residues His-1252 and Asp-1265 each act as for PL1-PRO activity in the active site. In terms of domain architecture, Macro spans 1303-1467 (KNIEFYQGEL…FQTEQPVEPL (165 aa)). The Ubiquitin-like 2 domain occupies 1638-1693 (AKPVQVVVTQDQRSFHTVELSTSQTYGQQLGDCVVEDKKVTNLKPVSKDKVVSVVP). In terms of domain architecture, Peptidase C16 2 spans 1699–1965 (KHYGFVDAGI…FLDTMNVASE (267 aa)). The active-site For PL2-PRO activity is Cys-1737. Residues 1816 to 1849 (TTCDGTCSTKRVVSTPVVNASVLKVGLDDGNCVH) form a C4-type 2; degenerate zinc finger. Catalysis depends on for PL2-PRO activity residues His-1902 and Asp-1915. The next 2 membrane-spanning stretches (helical) occupy residues 1973–1993 (FVSR…AICF) and 2036–2056 (YIKV…LMFM). Residues 1973–2184 (FVSRNIIVLI…MGNIIVVAFI (212 aa)) form an HD1 region. One can recognise a 3Ecto domain in the interval 2052–2116 (ALMFMFIRFT…TRVIWQHLKD (65 aa)). 2 disulfides stabilise this stretch: Cys-2068–Cys-2094 and Cys-2086–Cys-2091. The next 3 helical transmembrane spans lie at 2119–2139 (IGNI…GFFV), 2141–2161 (IGIT…LGYQ), and 2164–2184 (VWLL…VAFI). Residues 2190–2280 (LFLKHVLFGC…VTKLNVIPTG (91 aa)) are Y1. Residues 2190 to 2530 (LFLKHVLFGC…PTISVANKKG (341 aa)) enclose the CoV Nsp3 Y domain. Zn(2+) contacts are provided by His-2194, Cys-2199, Cys-2204, Cys-2207, Cys-2240, His-2243, Cys-2247, and Cys-2250. The segment at 2194-2207 (HVLFGCDKPSCIAC) is ZF1. Residues 2240 to 2250 (CKKHNFFCVDC) are ZF2. The interval 2281–2370 (PATIIIDKVE…LVDSALLASL (90 aa)) is Y2. The segment at 2281-2530 (PATIIIDKVE…PTISVANKKG (250 aa)) is coV-Y. Positions 2371-2428 (NVDFSANLHKAFVEVLSNSFGKDLSNCSNMNECRESLGLSDVPEEEFSAAVSEAHRYD) are Y3. The tract at residues 2429–2530 (VLISDVSFNN…PTISVANKKG (102 aa)) is Y4. 7 consecutive transmembrane segments (helical) span residues 2543-2563 (FFWH…LLDF), 2634-2654 (VPAG…TIFG), 2669-2689 (DSCI…RNVY), 2769-2789 (GSDY…IGMF), 2802-2822 (ILLN…FTKF), 2829-2849 (MSFG…SYVV), and 2878-2898 (VGFA…AYLI). The interval 2543–2898 (FFWHLCVLIV…PWWVVLAYLI (356 aa)) is HD2. Residues 2917–3012 (LFEGDKFVGS…PTVSYNSTLQ (96 aa)) enclose the Nsp4C domain. A Peptidase C30 domain is found at 3013–3314 (AGLRKMAQPS…VKQMYGVTLQ (302 aa)). Active-site for 3CL-PRO activity residues include His-3053 and Cys-3156. 7 helical membrane-spanning segments follow: residues 3351–3371 (GYIT…MLLV), 3376–3396 (LFLQ…NIFK), 3414–3434 (FGGF…VMGL), 3443–3463 (PNKI…YYYS), 3466–3486 (VLGL…IGTA), 3488–3507 (YKLA…FDAI), and 3511–3531 (VFLY…LYWI). Residues 3351-3531 (GYITPVFLAI…CVYYGSLYWI (181 aa)) form an HD3 region. A RdRp Nsp7 cofactor domain is found at 3591-3673 (SKLTDLKCTN…SYFNDSSVLQ (83 aa)). Residues 3674-3868 (SVAATYVNLP…LNCERIIKLQ (195 aa)) form the RdRp Nsp8 cofactor domain. Positions 3869–3976 (NNEIIPSKIK…GFIGATVRLQ (108 aa)) constitute a Nsp9 ssRNA-binding domain. An ExoN/MTase coactivator domain is found at 3977 to 4115 (AGKQTEQATN…DRAVIQSVDS (139 aa)). Positions 4050, 4053, 4059, 4066, 4092, 4095, 4103, and 4105 each coordinate Zn(2+). 2 zinc fingers span residues 4050–4066 (CLYC…DGFC) and 4092–4105 (CKVC…GCTC). The region spanning 4117-4366 (YLNRVRGSSA…ASECFIKSDI (250 aa)) is the NiRAN domain. The Nsp12 Interface domain maps to 4372 to 4470 (RTFDLLAYDF…WNKDLNLHSS (99 aa)). The Zn(2+) site is built by His-4401, Cys-4407, Cys-4412, Cys-4416, and Cys-4593. In terms of domain architecture, Nsp12 RNA-dependent RNA polymerase spans 4471–5038 (RLTINELLQF…SMYEQSSVLQ (568 aa)). The rdRp Fingers N-ter stretch occupies residues 4473 to 4687 (TINELLQFCA…HQKHLKSIVN (215 aa)). Residues 4688-4726 (TRGASVVIGTTKFYGGWDNMLKTLIKDVENPHLMGWDYP) form a rdRp Palm N-ter region. The RdRp catalytic domain occupies 4718–4880 (PHLMGWDYPK…CYNSEYAALG (163 aa)). The rdRp Fingers C-ter stretch occupies residues 4727-4785 (KCDRALPNMIRMISAMILGSKHVNCCSSSDRYYRLCNELAQVLTEMVYSNGGFYVKPGG). Positions 4748, 4751, and 4752 each coordinate Zn(2+). Positions 4786-4921 (TTSGDATTAY…NKGPHEFCSQ (136 aa)) are rdRp Palm C-ter. Catalysis depends on residues Ser-4865, Asp-4866, and Asp-4867. Residues 4922–5038 (HTMQIVDKDG…SMYEQSSVLQ (117 aa)) are rdRp Thumb. The CV ZBD domain maps to 5039–5151 (SAGLCVVCSS…DDFNTLATSD (113 aa)). Cys-5043, Cys-5046, Cys-5054, Cys-5057, Cys-5064, Cys-5067, His-5071, His-5077, Cys-5088, Cys-5093, Cys-5110, and His-5113 together coordinate Zn(2+). Residues 5296–5477 (NIHEDYSNLI…MCVLKPDIFL (182 aa)) enclose the (+)RNA virus helicase ATP-binding domain. An ATP-binding site is contributed by 5321-5328 (GPPGSGKS). The 170-residue stretch at 5478–5647 (HKCYRCPAEI…DGCGLFKDCY (170 aa)) folds into the (+)RNA virus helicase C-terminal domain. The ExoN domain occupies 5707-5921 (LFCTRDFAMR…RCLAIHDCFV (215 aa)). Active-site residues include Asp-5725, Glu-5727, and Glu-5826. The Zn(2+) site is built by Cys-5842, Cys-5844, Cys-5860, His-5863, His-5891, Cys-5895, and His-5898. Residues His-5902 and Asp-5907 contribute to the active site. Cys-5913 serves as a coordination point for Zn(2+). The N7-MTase domain maps to 5930–6151 (YPFIANEQAI…NLWQTFKNSN (222 aa)). An S-adenosyl-L-methionine-binding site is contributed by 5965–5971 (DVGNPKG). The tract at residues 6042-6056 (CNGGSLYVNNHAFHT) is gpppA-binding. The Zn(2+) site is built by Cys-6080, Cys-6097, Cys-6108, and His-6111. The Nsp15 N-terminal oligomerization domain maps to 6154-6214 (GLENIAYNVV…NVAFELYAKR (61 aa)). Residues 6215 to 6332 (KVGLTPPLTI…IYTRKDGAFV (118 aa)) enclose the AV-Nsp11N/CoV-Nsp15M domain. The NendoU domain maps to 6349 to 6489 (QPRSNMEEDF…KDHKVQTFYP (141 aa)). Residues His-6379, His-6394, Lys-6435, Lys-6537, Asp-6621, Lys-6661, and Glu-6694 contribute to the active site. The 297-residue stretch at 6493-6789 (SAEWKCGYSM…VVCGFSNHLV (297 aa)) folds into the Nidovirus-type SAM-dependent 2'-O-MTase domain.

It belongs to the coronaviruses polyprotein 1ab family. As to quaternary structure, 3CL-PRO exists as monomer and homodimer. Eight copies of nsp7 and eight copies of nsp8 assemble to form a heterohexadecamer. Nsp9 is a dimer. Nsp10 forms a dodecamer. The cofactor is Mn(2+). In terms of processing, specific enzymatic cleavages in vivo by its own proteases yield mature proteins. 3CL-PRO and PL-PRO proteinases are autocatalytically processed.

Its subcellular location is the host membrane. The protein localises to the host cytoplasm. It is found in the host perinuclear region. It localises to the host endoplasmic reticulum-Golgi intermediate compartment. The enzyme catalyses Thiol-dependent hydrolysis of ester, thioester, amide, peptide and isopeptide bonds formed by the C-terminal Gly of ubiquitin (a 76-residue protein attached to proteins as an intracellular targeting signal).. It carries out the reaction RNA(n) + a ribonucleoside 5'-triphosphate = RNA(n+1) + diphosphate. The catalysed reaction is ATP + H2O = ADP + phosphate + H(+). It catalyses the reaction a 5'-end diphospho-ribonucleoside in mRNA + GTP + H(+) = a 5'-end (5'-triphosphoguanosine)-ribonucleoside in mRNA + diphosphate. The enzyme catalyses a 5'-end (N(7)-methyl 5'-triphosphoguanosine)-ribonucleoside in mRNA + S-adenosyl-L-methionine = a 5'-end (N(7)-methyl 5'-triphosphoguanosine)-(2'-O-methyl-ribonucleoside) in mRNA + S-adenosyl-L-homocysteine + H(+). It carries out the reaction uridylyl-uridylyl-ribonucleotide-RNA = a 3'-end uridylyl-2',3'-cyclophospho-uridine-RNA + a 5'-end dephospho-ribonucleoside-RNA. Its function is as follows. The replicase polyprotein of coronaviruses is a multifunctional protein: it contains the activities necessary for the transcription of negative stranded RNA, leader RNA, subgenomic mRNAs and progeny virion RNA as well as proteinases responsible for the cleavage of the polyprotein into functional products. The papain-like proteinase 1 (PLP1) and papain-like proteinase 2 (PLP2) are responsible for the cleavages located at the N-terminus of the replicase polyprotein. In addition, PLP2 possesses a deubiquitinating/deISGylating activity and processes both 'Lys-48'- and 'Lys-63'-linked polyubiquitin chains from cellular substrates. PLP2 also antagonizes innate immune induction of type I interferon by blocking the nuclear translocation of host IRF-3. In terms of biological role, responsible for the majority of cleavages as it cleaves the C-terminus of replicase polyprotein at 11 sites. Recognizes substrates containing the core sequence [ILMVF]-Q-|-[SGACN]. Inhibited by the substrate-analog Cbz-Val-Asn-Ser-Thr-Leu-Gln-CMK. Also contains an ADP-ribose-1''-phosphate (ADRP)-binding function. Functionally, the helicase which contains a zinc finger structure displays RNA and DNA duplex-unwinding activities with 5' to 3' polarity. ATPase activity is strongly stimulated by poly(U), poly(dT), poly(C), poly(dA), but not by poly(G). Its function is as follows. The exoribonuclease acts on both ssRNA and dsRNA in a 3' to 5' direction. Nsp7-nsp8 hexadecamer may possibly confer processivity to the polymerase, maybe by binding to dsRNA or by producing primers utilized by the latter. In terms of biological role, forms a primer, NSP9-pU, which is utilized by the polymerase for the initiation of RNA chains. Interacts with ribosome signal recognition particle RNA (SRP). Together with NSP8, suppress protein integration into the cell membrane, thereby disrupting host immune defenses. Functionally, RNA-directed RNA polymerase that catalyzes the transcription of viral genomic and subgenomic RNAs. Acts in complex with nsp7 and nsp8 to transcribe both the minus and positive strands of genomic RNA. The kinase-like NiRAN domain of NSP12 attaches one or more nucleotides to the amino terminus of NSP9, forming a covalent RNA-protein intermediate that serves as transcription/replication primer. Subgenomic RNAs (sgRNAs) are formed by discontinuous transcription: The polymerase has the ability to pause at transcription-regulating sequences (TRS) and jump to the leader TRS, resulting in a major deletion. This creates a series of subgenomic RNAs that are replicated, transcribed and translated. In addition, Nsp12 is a subunit of the viral RNA capping enzyme that catalyzes the RNA guanylyltransferase reaction for genomic and sub-genomic RNAs. Subsequently, the NiRAN domain transfers RNA to GDP, and forms the core cap structure GpppA-RNA. Its function is as follows. Plays a role in viral transcription/replication and prevents the simultaneous activation of host cell dsRNA sensors, such as MDA5/IFIH1, OAS, and PKR. Acts by degrading the 5'-polyuridines generated during replication of the poly(A) region of viral genomic and subgenomic RNAs. Catalyzes a two-step reaction in which a 2'3'-cyclic phosphate (2'3'-cP) is first generated by 2'-O transesterification, which is then hydrolyzed to a 3'-phosphate (3'-P). If not degraded, poly(U) RNA would hybridize with poly(A) RNA tails and activate host dsRNA sensors. In Bat coronavirus 512/2005 (BtCoV), this protein is Replicase polyprotein 1ab (rep).